The following is a 444-amino-acid chain: 3-phosphoshikimate 1-carboxyvinyltransferase (444 aa).

Residues K29, S30, and R34 each coordinate 3-phosphoshikimate. K29 provides a ligand contact to phosphoenolpyruvate. Positions 102 and 131 each coordinate phosphoenolpyruvate. The 3-phosphoshikimate site is built by S176, Q178, D326, and K353. Residue Q178 participates in phosphoenolpyruvate binding. D326 functions as the Proton acceptor in the catalytic mechanism. Phosphoenolpyruvate is bound by residues R357 and R399.

This sequence belongs to the EPSP synthase family. As to quaternary structure, monomer.

Its subcellular location is the cytoplasm. The catalysed reaction is 3-phosphoshikimate + phosphoenolpyruvate = 5-O-(1-carboxyvinyl)-3-phosphoshikimate + phosphate. It functions in the pathway metabolic intermediate biosynthesis; chorismate biosynthesis; chorismate from D-erythrose 4-phosphate and phosphoenolpyruvate: step 6/7. Its function is as follows. Catalyzes the transfer of the enolpyruvyl moiety of phosphoenolpyruvate (PEP) to the 5-hydroxyl of shikimate-3-phosphate (S3P) to produce enolpyruvyl shikimate-3-phosphate and inorganic phosphate. In Synechococcus sp. (strain JA-3-3Ab) (Cyanobacteria bacterium Yellowstone A-Prime), this protein is 3-phosphoshikimate 1-carboxyvinyltransferase.